We begin with the raw amino-acid sequence, 436 residues long: NADH-quinone oxidoreductase subunit D 1 (436 aa).

Belongs to the complex I 49 kDa subunit family. NDH-1 is composed of 14 different subunits. Subunits NuoB, C, D, E, F, and G constitute the peripheral sector of the complex.

Its subcellular location is the cell inner membrane. The catalysed reaction is a quinone + NADH + 5 H(+)(in) = a quinol + NAD(+) + 4 H(+)(out). Functionally, NDH-1 shuttles electrons from NADH, via FMN and iron-sulfur (Fe-S) centers, to quinones in the respiratory chain. The immediate electron acceptor for the enzyme in this species is believed to be ubiquinone. Couples the redox reaction to proton translocation (for every two electrons transferred, four hydrogen ions are translocated across the cytoplasmic membrane), and thus conserves the redox energy in a proton gradient. The protein is NADH-quinone oxidoreductase subunit D 1 of Stenotrophomonas maltophilia (strain R551-3).